The chain runs to 164 residues: Lipoprotein signal peptidase (164 aa).

The next 4 membrane-spanning stretches (helical) occupy residues 12–32 (WLWL…LILQ), 42–62 (LFPS…SFLA), 70–90 (WFFA…MYRS), and 102–122 (ALII…GFVV). Active-site residues include Asp-123 and Asp-141. Residues 137 to 157 (FNLADTAICVGAALIVLEGFL) form a helical membrane-spanning segment.

Belongs to the peptidase A8 family.

The protein localises to the cell inner membrane. It carries out the reaction Release of signal peptides from bacterial membrane prolipoproteins. Hydrolyzes -Xaa-Yaa-Zaa-|-(S,diacylglyceryl)Cys-, in which Xaa is hydrophobic (preferably Leu), and Yaa (Ala or Ser) and Zaa (Gly or Ala) have small, neutral side chains.. The protein operates within protein modification; lipoprotein biosynthesis (signal peptide cleavage). Its function is as follows. This protein specifically catalyzes the removal of signal peptides from prolipoproteins. The chain is Lipoprotein signal peptidase from Shigella flexneri serotype 5b (strain 8401).